Consider the following 174-residue polypeptide: Adenine phosphoribosyltransferase (174 aa).

This sequence belongs to the purine/pyrimidine phosphoribosyltransferase family. In terms of assembly, homodimer.

It is found in the cytoplasm. It catalyses the reaction AMP + diphosphate = 5-phospho-alpha-D-ribose 1-diphosphate + adenine. It functions in the pathway purine metabolism; AMP biosynthesis via salvage pathway; AMP from adenine: step 1/1. Its function is as follows. Catalyzes a salvage reaction resulting in the formation of AMP, that is energically less costly than de novo synthesis. The polypeptide is Adenine phosphoribosyltransferase (Dichelobacter nodosus (strain VCS1703A)).